Consider the following 439-residue polypeptide: tRNA modification GTPase MnmE (439 aa).

(6S)-5-formyl-5,6,7,8-tetrahydrofolate is bound by residues Arg24, Glu81, and Lys121. Positions 218 to 363 (GFKVVIAGAP…LRDLIGRVVK (146 aa)) constitute a TrmE-type G domain. Residue Asn228 participates in K(+) binding. GTP-binding positions include 228 to 233 (NAGKSS), 247 to 253 (TDIAGTT), and 272 to 275 (DTAG). Ser232 contributes to the Mg(2+) binding site. 3 residues coordinate K(+): Thr247, Ile249, and Thr252. Mg(2+) is bound at residue Thr253. (6S)-5-formyl-5,6,7,8-tetrahydrofolate is bound at residue Lys439.

This sequence belongs to the TRAFAC class TrmE-Era-EngA-EngB-Septin-like GTPase superfamily. TrmE GTPase family. Homodimer. Heterotetramer of two MnmE and two MnmG subunits. The cofactor is K(+).

It is found in the cytoplasm. Its function is as follows. Exhibits a very high intrinsic GTPase hydrolysis rate. Involved in the addition of a carboxymethylaminomethyl (cmnm) group at the wobble position (U34) of certain tRNAs, forming tRNA-cmnm(5)s(2)U34. The polypeptide is tRNA modification GTPase MnmE (Rhizobium etli (strain CIAT 652)).